An 823-amino-acid chain; its full sequence is Ankyrin repeat domain-containing protein 20A1 (823 aa).

5 ANK repeats span residues 66 to 95 (QHRTALHLACTSGHVQVVTLLVNRKCQIDV), 99 to 128 (ENRTPLIQAVHCQEEACAVILLEHGANPNL), 132 to 161 (YGNTALHYAVYSESTSLAEKLLSHGAHIEA), 165 to 194 (DNNTPLLFAIICKKEKMVEFLLKKKASSHA), and 198 to 227 (LRRSALMLAVYYDSPGIVNILLKQNIDVFA). Disordered stretches follow at residues 301-343 (VPEK…EVED) and 355-402 (VQTL…LSEN). The span at 372–384 (QERHERSEKKQPQ) shows a compositional bias: basic and acidic residues. Coiled coils occupy residues 431-480 (KKLK…KQLE), 565-724 (EMIT…NNST), and 776-805 (LVLEEKSKKLMNECDHLKESLFQYEREKTE).

This is Ankyrin repeat domain-containing protein 20A1 (ANKRD20A1) from Homo sapiens (Human).